A 175-amino-acid chain; its full sequence is Bifunctional protein PyrR (175 aa).

Residues 40-41 (TR), 102-110 (DDVLYTGRT), Arg-135, and Val-159 each bind substrate. The PRPP-binding motif lies at 98-110 (VIIIDDVLYTGRT).

The protein belongs to the purine/pyrimidine phosphoribosyltransferase family. PyrR subfamily. In terms of assembly, homodimer and homohexamer; in equilibrium.

It catalyses the reaction UMP + diphosphate = 5-phospho-alpha-D-ribose 1-diphosphate + uracil. Regulates transcriptional attenuation of the pyrimidine nucleotide (pyr) operon by binding in a uridine-dependent manner to specific sites on pyr mRNA. This disrupts an antiterminator hairpin in the RNA and favors formation of a downstream transcription terminator, leading to a reduced expression of downstream genes. In terms of biological role, also displays a weak uracil phosphoribosyltransferase activity which is not physiologically significant. This chain is Bifunctional protein PyrR, found in Staphylococcus haemolyticus (strain JCSC1435).